The sequence spans 897 residues: MNSMNQIETNMQYTYNYEEDEYMTQEEEWDRDLLLDPAWEKQQRKTFTAWCNSHLRKAGTQIENIEEDFRNGLKLMLLLEVISGERLPKPDRGKMRFHKIANVNKALDYIASKGVKLVSIGAEEIVDGNVKMTLGMIWTIILRFAIQDISVEETSAKEGLLLWCQRKTAPYRNVNIQNFHLSWKDGLGLCALIHRHRPDLIDYSKLNKDDPIGNINLAMEIAEKHLDIPKMLDAEDIVNTPKPDERAIMTYVSCFYHAFAGAEQAETAANRICKVLAVNQENERLMEEYERLASELLEWIRRTIPWLENRTPEKTMQAMQKKLEDFRDYRRKHKPPKVQEKCQLEINFNTLQTKLRISNRPAFMPSEGKMVSDIAGAWQRLEQAEKGYEEWLLNEIRRLERLEHLAEKFRQKASTHEQWAYGKEQILLQKDYESASLTEVRAMLRKHEAFESDLAAHQDRVEQIAAIAQELNELDYHDAASVNDRCQKICDQWDSLGTLTQKRREALERTEKLLETIDQLHLEFAKRAAPFNNWMEGAMEDLQDMFIVHSIEEIQSLISAHDQFKATLPEADGERQAILSIQNEVEKVIQSYSMRISASNPYSTVTVEEIRTKWEKVKQLVPQRDQSLQEELARQHANERLRRQFAAQANVIGPWIQTKMEEIARSSIEMTGPLEDQMNQLKQYEQNIINYKHNIDKLEGDHQLIQEALVFDNKHTNYTMEHIRVGWELLLTTIARTINEVETQILTRDAKGITQEQMNDFRASFNHFDRRKNGLMDHDDFRACLISMGYDLGEAEFARIMSLVDPNGQGTVTFQSFIDFMTRETADTDTAEQVIASFRILASDKPYILADELRRELPPEQAQYCIKRMPQYTGPGSVPGALDYTSFSSALYGESDL.

Residues 1–257 (MNSMNQIETN…IMTYVSCFYH (257 aa)) form an actin-binding region. 2 Calponin-homology (CH) domains span residues 41 to 145 (KQQR…LRFA) and 154 to 260 (TSAK…HAFA). Spectrin repeat units follow at residues 284 to 394 (RLME…WLLN), 404 to 509 (HLAE…ALER), 519 to 630 (QLHL…SLQE), and 640 to 743 (RLRR…EVET). 2 EF-hand domains span residues 756-791 (EQMN…MGYD) and 792-827 (LGEA…ETAD). Ca(2+)-binding residues include aspartate 769, asparagine 773, aspartate 780, aspartate 805, asparagine 807, and threonine 811.

This sequence belongs to the alpha-actinin family. As to quaternary structure, homodimer; antiparallel. Post-translationally, ubiquitinated by FBXL22, leading to proteasomal degradation.

The protein localises to the cytoplasm. It is found in the myofibril. The protein resides in the sarcomere. Its subcellular location is the z line. In terms of biological role, F-actin cross-linking protein which is thought to anchor actin to a variety of intracellular structures. This is a bundling protein. This is Alpha-actinin-2 (ACTN2) from Gallus gallus (Chicken).